A 186-amino-acid chain; its full sequence is Putative manganese efflux pump MntP (186 aa).

6 helical membrane passes run 1–21 (MSFL…FAVS), 41–61 (VFFG…GSAV), 62–82 (SGFV…FIGG), 105–127 (LFLL…AFLG), 139–159 (CVTF…GHFF), and 163–183 (VEIL…AEHM).

This sequence belongs to the MntP (TC 9.B.29) family.

The protein localises to the cell membrane. Functionally, probably functions as a manganese efflux pump. The chain is Putative manganese efflux pump MntP from Methanosarcina mazei (strain ATCC BAA-159 / DSM 3647 / Goe1 / Go1 / JCM 11833 / OCM 88) (Methanosarcina frisia).